Reading from the N-terminus, the 396-residue chain is Phosphopentomutase (396 aa).

6 residues coordinate Mn(2+): Asp-14, Asp-286, His-291, Asp-327, His-328, and His-339.

This sequence belongs to the phosphopentomutase family. The cofactor is Mn(2+).

It is found in the cytoplasm. The catalysed reaction is 2-deoxy-alpha-D-ribose 1-phosphate = 2-deoxy-D-ribose 5-phosphate. The enzyme catalyses alpha-D-ribose 1-phosphate = D-ribose 5-phosphate. It participates in carbohydrate degradation; 2-deoxy-D-ribose 1-phosphate degradation; D-glyceraldehyde 3-phosphate and acetaldehyde from 2-deoxy-alpha-D-ribose 1-phosphate: step 1/2. In terms of biological role, isomerase that catalyzes the conversion of deoxy-ribose 1-phosphate (dRib-1-P) and ribose 1-phosphate (Rib-1-P) to deoxy-ribose 5-phosphate (dRib-5-P) and ribose 5-phosphate (Rib-5-P), respectively. The polypeptide is Phosphopentomutase (Staphylococcus carnosus (strain TM300)).